Consider the following 544-residue polypeptide: Chaperonin GroEL (544 aa).

ATP is bound by residues 29-32 (TIGP), 86-90 (DGTTT), Gly413, 478-480 (NAA), and Asp494.

Belongs to the chaperonin (HSP60) family. As to quaternary structure, forms a cylinder of 14 subunits composed of two heptameric rings stacked back-to-back. Interacts with the co-chaperonin GroES.

It is found in the cytoplasm. The catalysed reaction is ATP + H2O + a folded polypeptide = ADP + phosphate + an unfolded polypeptide.. In terms of biological role, together with its co-chaperonin GroES, plays an essential role in assisting protein folding. The GroEL-GroES system forms a nano-cage that allows encapsulation of the non-native substrate proteins and provides a physical environment optimized to promote and accelerate protein folding. The protein is Chaperonin GroEL of Exiguobacterium sp. (strain ATCC BAA-1283 / AT1b).